A 312-amino-acid polypeptide reads, in one-letter code: Glycine--tRNA ligase alpha subunit (312 aa).

Belongs to the class-II aminoacyl-tRNA synthetase family. In terms of assembly, tetramer of two alpha and two beta subunits.

Its subcellular location is the cytoplasm. The enzyme catalyses tRNA(Gly) + glycine + ATP = glycyl-tRNA(Gly) + AMP + diphosphate. This is Glycine--tRNA ligase alpha subunit from Methylobacillus flagellatus (strain ATCC 51484 / DSM 6875 / VKM B-1610 / KT).